We begin with the raw amino-acid sequence, 854 residues long: Iron and copper transporter IacT (854 aa).

A TonB box motif is present at residues 187–194 (IELIVTAQ). The 117-residue stretch at 199-315 (DAQDVPLSLT…PAGVVNVISR (117 aa)) folds into the TBDR plug domain. The TBDR beta-barrel domain maps to 320–854 (QPEMRISALY…TYGVRVSASF (535 aa)). A TonB C-terminal box motif is present at residues 839-854 (GFGDPVTYGVRVSASF).

The protein belongs to the TonB-dependent receptor family.

The protein localises to the cell outer membrane. Functionally, involved in the TonB-dependent uptake of copper and iron under conditions in which the concentration of copper exceeds that of the iron. This Nostoc sp. (strain PCC 7120 / SAG 25.82 / UTEX 2576) protein is Iron and copper transporter IacT.